The following is a 275-amino-acid chain: MWQPPTQNGTQLERHWFESVWRSHAAFCSCGDCIGHLQHLATNLGRPPAPQPPRDQHPPHIRGLPALPAPPSNRNSWPGTGGDAAGGEAGGSRGAGDGGDGELADEDLLDAIALAADPQTQTPQERHPGQRKNARKRLRFSSPTQKTPALDPLQSRNKRRRGGDTGGPGTRTTSPAAPAAATPQSPARVHCPRSPQNQEGAQPPPPTIFPCINKVFMFNPPGPKRITGYEAWRDEYETCKAWNRPPRSFYTDIPTYTWMPKAQDQFRVSFKLGFH.

Disordered regions lie at residues 44–103 (LGRP…DGEL) and 116–207 (ADPQ…PPPT). A compositionally biased stretch (gly residues) spans 79–98 (GTGGDAAGGEAGGSRGAGDG). The span at 129 to 139 (GQRKNARKRLR) shows a compositional bias: basic residues. The segment covering 170-188 (TRTTSPAAPAAATPQSPAR) has biased composition (low complexity).

This chain is ORF2/4 protein, found in Torque teno virus (isolate Human/Finland/Hel32/2002) (TTV).